A 210-amino-acid chain; its full sequence is Uracil phosphoribosyltransferase (210 aa).

5-phospho-alpha-D-ribose 1-diphosphate is bound by residues R80, R105, and 132–140; that span reads DPMLATGGS. Uracil-binding positions include I195 and 200 to 202; that span reads GDA. D201 lines the 5-phospho-alpha-D-ribose 1-diphosphate pocket.

The protein belongs to the UPRTase family. Mg(2+) serves as cofactor.

It carries out the reaction UMP + diphosphate = 5-phospho-alpha-D-ribose 1-diphosphate + uracil. Its pathway is pyrimidine metabolism; UMP biosynthesis via salvage pathway; UMP from uracil: step 1/1. Its activity is regulated as follows. Allosterically activated by GTP. Functionally, catalyzes the conversion of uracil and 5-phospho-alpha-D-ribose 1-diphosphate (PRPP) to UMP and diphosphate. The chain is Uracil phosphoribosyltransferase from Deinococcus radiodurans (strain ATCC 13939 / DSM 20539 / JCM 16871 / CCUG 27074 / LMG 4051 / NBRC 15346 / NCIMB 9279 / VKM B-1422 / R1).